Reading from the N-terminus, the 393-residue chain is MDKKVYQCTVSAPVNIAVIKYWGKRDVALNLPTNSSISVTLSQDDLRTVTTASCSEKFENDTLWLNGNAEEIFANKRLRVCVEELRKARLDLEEENDDLDKIGALKLHVVSENNFPTAAGLASSAAGYAAFCEAIARLYDLPWTPTQLSRIARQGSGSACRSLFGGYVAWEMGELHSGADSVAVQVEPVENWPEIRVAVLVASAAKKGVSSTAGMQATVASSTLFQHRIQNIVPQRIQEMKTAIRERDFETFAKLTMTDSNQFHACCLDTFPPIFYLNDTSRAVIRVVENINATAGKTIAAYTFDAGPNAVIYFLEENSEIVLNTLYAVTKNAEGWSKQYGSSPVTVDSAAANIVSSGISRVILTRVGNGPRVLTIDESLIDASGNPKFIGSH.

(R)-5-diphosphomevalonate contacts are provided by residues 21 to 24 (YWGK), R77, 156 to 161 (SGSACR), and T212.

The protein belongs to the diphosphomevalonate decarboxylase family. Homodimer.

It is found in the cytoplasm. The protein resides in the nucleus. It carries out the reaction (R)-5-diphosphomevalonate + ATP = isopentenyl diphosphate + ADP + phosphate + CO2. Its pathway is isoprenoid biosynthesis; isopentenyl diphosphate biosynthesis via mevalonate pathway; isopentenyl diphosphate from (R)-mevalonate: step 3/3. Functionally, diphosphomevalonate decarboxylase; part of the second module of ergosterol biosynthesis pathway that includes the middle steps of the pathway. Mvd1 converts diphosphomevalonate into isopentenyl diphosphate. The second module is carried out in the vacuole and involves the formation of farnesyl diphosphate, which is also an important intermediate in the biosynthesis of ubiquinone, dolichol, heme and prenylated proteins. Activity by the mevalonate kinase erg12 first converts mevalonate into 5-phosphomevalonate. 5-phosphomevalonate is then further converted to 5-diphosphomevalonate by the phosphomevalonate kinase erg8. The diphosphomevalonate decarboxylase mvd1 then produces isopentenyl diphosphate. The isopentenyl-diphosphate delta-isomerase idi1 then catalyzes the 1,3-allylic rearrangement of the homoallylic substrate isopentenyl (IPP) to its highly electrophilic allylic isomer, dimethylallyl diphosphate (DMAPP). Finally the farnesyl diphosphate synthase fps1 catalyzes the sequential condensation of isopentenyl pyrophosphate with dimethylallyl pyrophosphate, and then with the resultant geranylpyrophosphate to the ultimate product farnesyl pyrophosphate. The chain is Diphosphomevalonate decarboxylase (mvd1) from Schizosaccharomyces pombe (strain 972 / ATCC 24843) (Fission yeast).